We begin with the raw amino-acid sequence, 206 residues long: dTTP/UTP pyrophosphatase (206 aa).

Catalysis depends on Asp-79, which acts as the Proton acceptor.

This sequence belongs to the Maf family. YhdE subfamily. A divalent metal cation serves as cofactor.

The protein localises to the cytoplasm. It carries out the reaction dTTP + H2O = dTMP + diphosphate + H(+). It catalyses the reaction UTP + H2O = UMP + diphosphate + H(+). Nucleoside triphosphate pyrophosphatase that hydrolyzes dTTP and UTP. May have a dual role in cell division arrest and in preventing the incorporation of modified nucleotides into cellular nucleic acids. The chain is dTTP/UTP pyrophosphatase from Rhizobium etli (strain ATCC 51251 / DSM 11541 / JCM 21823 / NBRC 15573 / CFN 42).